Reading from the N-terminus, the 171-residue chain is Co-chaperone protein HscB homolog (171 aa).

The 73-residue stretch at 2–74 (NHFELFGLPN…VSRAEYILSE (73 aa)) folds into the J domain.

This sequence belongs to the HscB family. Interacts with HscA and stimulates its ATPase activity.

Its function is as follows. Co-chaperone involved in the maturation of iron-sulfur cluster-containing proteins. Seems to help targeting proteins to be folded toward HscA. The chain is Co-chaperone protein HscB homolog from Aliivibrio fischeri (strain ATCC 700601 / ES114) (Vibrio fischeri).